Reading from the N-terminus, the 436-residue chain is Ribulose bisphosphate carboxylase large chain (436 aa).

Substrate-binding residues include asparagine 104 and threonine 154. The active-site Proton acceptor is lysine 156. Lysine 158 provides a ligand contact to substrate. Mg(2+)-binding residues include lysine 182, aspartate 184, and glutamate 185. At lysine 182 the chain carries N6-carboxylysine. Histidine 275 (proton acceptor) is an active-site residue. The substrate site is built by arginine 276, histidine 308, and serine 360.

This sequence belongs to the RuBisCO large chain family. Type I subfamily. Heterohexadecamer of 8 large chains and 8 small chains. It depends on Mg(2+) as a cofactor.

Its subcellular location is the plastid. It is found in the chloroplast. The catalysed reaction is 2 (2R)-3-phosphoglycerate + 2 H(+) = D-ribulose 1,5-bisphosphate + CO2 + H2O. It carries out the reaction D-ribulose 1,5-bisphosphate + O2 = 2-phosphoglycolate + (2R)-3-phosphoglycerate + 2 H(+). In terms of biological role, ruBisCO catalyzes two reactions: the carboxylation of D-ribulose 1,5-bisphosphate, the primary event in carbon dioxide fixation, as well as the oxidative fragmentation of the pentose substrate in the photorespiration process. Both reactions occur simultaneously and in competition at the same active site. The chain is Ribulose bisphosphate carboxylase large chain from Euglena viridis (Cercaria viridis).